Reading from the N-terminus, the 1034-residue chain is Tubulin glycylase 3D (1034 aa).

Polar residues-rich tracts occupy residues 1-13 (MINSHHTSQQTLN) and 131-146 (QVNSVLADNSNIQNDF). 3 disordered regions span residues 1 to 21 (MINSHHTSQQTLNKESKSQMD), 131 to 166 (QVNSVLADNSNIQNDFYPQYRKPKNPTTKKRQSTDY), and 189 to 208 (LNQQNQQQQDLAKNRVDNSQ). Basic residues predominate over residues 151–161 (RKPKNPTTKKR). Residues 189-199 (LNQQNQQQQDL) show a composition bias toward low complexity. The 360-residue stretch at 571–930 (DINNVIDDEK…YGMAQKSGIK (360 aa)) folds into the TTL domain. ATP contacts are provided by residues 741-744 (QKYI), K754, and D756. Residues 1002–1034 (HDQKQFSSQQANNIETYSRPQTAKSQTQSSKKL) are disordered.

Its subcellular location is the cytoplasm. In terms of biological role, probable glycylase which modifies tubulin, generating side chains of glycine on the gamma-carboxyl groups of specific glutamate residues within the C-terminal tail of tubulin. This Tetrahymena thermophila (strain SB210) protein is Tubulin glycylase 3D (TTLL3D).